We begin with the raw amino-acid sequence, 303 residues long: Histone deacetylase HDT2 (303 aa).

The segment covering 100–112 (EMDLDSEDEEEEL) has biased composition (acidic residues). The disordered stretch occupies residues 100–282 (EMDLDSEDEE…SGGSVPCKSC (183 aa)). Basic and acidic residues predominate over residues 119-133 (ENGKADGKEEQKNQE). Acidic residues predominate over residues 154 to 203 (DSDDSDEDESDDSDEDDSDDSDEGEGLSPDEGDDDSSDEDDTSDDDEEET). Positions 204 to 217 (PTPKKPEAGKKRGA) are enriched in basic and acidic residues. Residues 277–300 (VPCKSCSKTFNSEMALQAHSKAKH) form a C2H2-type zinc finger.

The protein belongs to the histone deacetylase HD2 family. Multimer. Possibly forms a homotrimer with HDT1 and/or HDT3.

The protein resides in the nucleus. It localises to the nucleolus. In terms of biological role, mediates the deacetylation of lysine residues on the N-terminal part of the core histones (H2A, H2B, H3 and H4). Histone deacetylation gives a tag for epigenetic repression and plays an important role in transcriptional regulation, cell cycle progression and developmental events. The sequence is that of Histone deacetylase HDT2 (HDT2) from Zea mays (Maize).